The primary structure comprises 169 residues: NAD(P)H-quinone oxidoreductase subunit J, chloroplastic (169 aa).

This sequence belongs to the complex I 30 kDa subunit family. As to quaternary structure, NDH is composed of at least 16 different subunits, 5 of which are encoded in the nucleus.

Its subcellular location is the plastid. The protein localises to the chloroplast thylakoid membrane. The catalysed reaction is a plastoquinone + NADH + (n+1) H(+)(in) = a plastoquinol + NAD(+) + n H(+)(out). It carries out the reaction a plastoquinone + NADPH + (n+1) H(+)(in) = a plastoquinol + NADP(+) + n H(+)(out). Functionally, NDH shuttles electrons from NAD(P)H:plastoquinone, via FMN and iron-sulfur (Fe-S) centers, to quinones in the photosynthetic chain and possibly in a chloroplast respiratory chain. The immediate electron acceptor for the enzyme in this species is believed to be plastoquinone. Couples the redox reaction to proton translocation, and thus conserves the redox energy in a proton gradient. The protein is NAD(P)H-quinone oxidoreductase subunit J, chloroplastic of Staurastrum punctulatum (Green alga).